The primary structure comprises 633 residues: Electron transfer flavoprotein-ubiquinone oxidoreductase, mitochondrial (633 aa).

The transit peptide at 1-90 directs the protein to the mitochondrion; sequence MHRFLVKLSS…NGITSSRCIS (90 aa). 102–116 is a binding site for FAD; sequence VLIVGAGPAGLSAAI. Residues 140–161 lie within the membrane without spanning it; the sequence is VGGHIISGNVFEPLALDELLPH. A ubiquinone contacts are provided by glycine 334 and glycine 335. Residues 401 to 421 lie within the membrane without spanning it; sequence IPYPVFPGGAIIGCSAGFLNV. [4Fe-4S] cluster-binding residues include cysteine 578, cysteine 602, cysteine 605, and cysteine 608. A 4Fe-4S ferredoxin-type domain is found at 593–622; the sequence is PKLQINAQNCLHCKACDIKDPKQNIEWTVP.

This sequence belongs to the ETF-QO/FixC family. It depends on [4Fe-4S] cluster as a cofactor. FAD is required as a cofactor.

It is found in the mitochondrion inner membrane. It carries out the reaction a ubiquinone + reduced [electron-transfer flavoprotein] = a ubiquinol + oxidized [electron-transfer flavoprotein] + H(+). With respect to regulation, up-regulated by KIN10, by S1-bZIP specific dimers, and also by C/S1 bZIP heterodimers. Accepts electrons from ETF and reduces ubiquinone. May act downstream of IVD and D2HGDH in the degradation of phytol or chlorophyll during dark-induced senescence and sugar starvation. The chain is Electron transfer flavoprotein-ubiquinone oxidoreductase, mitochondrial (ETFQO) from Arabidopsis thaliana (Mouse-ear cress).